Consider the following 164-residue polypeptide: Putative pre-16S rRNA nuclease (164 aa).

This sequence belongs to the YqgF nuclease family.

The protein localises to the cytoplasm. Its function is as follows. Could be a nuclease involved in processing of the 5'-end of pre-16S rRNA. This Rhizobium johnstonii (strain DSM 114642 / LMG 32736 / 3841) (Rhizobium leguminosarum bv. viciae) protein is Putative pre-16S rRNA nuclease.